A 447-amino-acid chain; its full sequence is Mannose/glucose-specific lectin (447 aa).

3 consecutive Jacalin-type lectin domains span residues 5–148, 153–294, and 300–443; these read MISV…FVKP, TISF…YVKP, and SISI…FVKP.

This sequence belongs to the jacalin lectin family. Expressed in seeds (at protein level).

Its activity is regulated as follows. Hemagglutinating activity is slightly inhibited by alpha-methyl-D-mannopyranoside. D-mannose/D-glucose-binding lectin that also binds derivatives N-acetyl-D-glucosamine and alpha-methyl-D-mannopyranoside. Does not bind D-galactose, L-Rhamnose, D-fructose, lactose or glycoproteins fetiun and mucin. Shows agglutinating activity towards human and rabbit erythrocytes. Also displays antimicrobial activity against L.infantum. In Parkia pendula (Inga pendula), this protein is Mannose/glucose-specific lectin.